Consider the following 188-residue polypeptide: COMM domain-containing protein 1 (188 aa).

The segment at 1–122 (MAAELEGSKC…CWDRGLRSLS (122 aa)) is sufficient for interaction with SLC12A2. Residues histidine 100, methionine 109, and histidine 133 each contribute to the Cu cation site. The region spanning 117-185 (GLRSLSWRVD…EVEESISTLM (69 aa)) is the COMM domain. Positions 124–188 (RVDGKSQSRH…ESISTLMQPA (65 aa)) are required for binding to PtdIns(4,5)P2.

This sequence belongs to the COMM domain-containing protein 1 family. Component of the commander complex consisting of the CCC subcomplex and the retriever subcomplex. Component of the CCC (COMMD/CCDC22/CCDC93) subcomplex consisting of COMMD1, COMMD2, COMMD3, COMMD4, COMMD5, COMMD6, COMMD7, COMMD8, COMMD9, COMMD10, CCDC22 and CCDC93; within the complex forms a heterodimer with COMMD6. Interacts with VPS35L; the interaction associates the CCC complex with the retriever complex. Identified in a complex with an E3 ubiquitin ligase complex composed of TCEB1/elongin C, CUL2, SOCS1 and RBX1; in the complex interacts directly with SOCS1 and CUL2. Identified in a complex with NF-kappa-B. Interacts directly with SLC12A2. Interacts directly with ATP7B (via the N-terminal region). Interacts with ATP7A. Interacts with FAM107A; this interaction stabilizes COMMD1 in the nucleus. Interacts with CCS, CDKN2A, RELA, REL, RELB, NFKB1/p105, NFKB2/p100, NFKBIB, SCNN1D, SCNN1B, CFTR, CLU, SGK1, AKT1, CUL1, CUL2, CUL3, CUL4A, CUL4B, CUL5, CUL7, HIF1A. Ubiquitinated; undergoes both 'Lys-63'- and 'Lys-48'-linked polyubiquitination. Ubiquitinated by XIAP, leading to its proteasomal degradation.

The protein resides in the nucleus. It is found in the cytoplasm. It localises to the endosome membrane. The protein localises to the cytoplasmic vesicle. Its subcellular location is the early endosome. The protein resides in the recycling endosome. Its function is as follows. Scaffold protein in the commander complex that is essential for endosomal recycling of transmembrane cargos; the commander complex is composed of the CCC subcomplex and the retriever subcomplex. Can modulate activity of cullin-RING E3 ubiquitin ligase (CRL) complexes by displacing CAND1; in vitro promotes CRL E3 activity and dissociates CAND1 from CUL1 and CUL2. Promotes ubiquitination of NF-kappa-B subunit RELA and its subsequent proteasomal degradation. Down-regulates NF-kappa-B activity. Involved in the regulation of membrane expression and ubiquitination of SLC12A2. Modulates Na(+) transport in epithelial cells by regulation of apical cell surface expression of amiloride-sensitive sodium channel (ENaC) subunits and by promoting their ubiquitination presumably involving NEDD4L. Promotes the localization of SCNN1D to recycling endosomes. Promotes CFTR cell surface expression through regulation of its ubiquitination. Down-regulates SOD1 activity by interfering with its homodimerization. Plays a role in copper ion homeostasis. Involved in copper-dependent ATP7A trafficking between the trans-Golgi network and vesicles in the cell periphery; the function is proposed to depend on its association within the CCC complex and cooperation with the WASH complex on early endosomes. Can bind one copper ion per monomer. May function to facilitate biliary copper excretion within hepatocytes. Binds to phosphatidylinositol 4,5-bisphosphate (PtdIns(4,5)P2). Involved in the regulation of HIF1A-mediated transcription; competes with ARNT/Hif-1-beta for binding to HIF1A resulting in decreased DNA binding and impaired transcriptional activation by HIF-1. Negatively regulates neuroblastoma G1/S phase cell cycle progression and cell proliferation by stimulating ubiquitination of NF-kappa-B subunit RELA and NF-kappa-B degradation in a FAM107A- and actin-dependent manner. The polypeptide is COMM domain-containing protein 1 (COMMD1) (Bos taurus (Bovine)).